The following is a 116-amino-acid chain: Large ribosomal subunit protein bL20 (116 aa).

The protein belongs to the bacterial ribosomal protein bL20 family.

Its function is as follows. Binds directly to 23S ribosomal RNA and is necessary for the in vitro assembly process of the 50S ribosomal subunit. It is not involved in the protein synthesizing functions of that subunit. This Mycoplasmopsis fermentans (Mycoplasma fermentans) protein is Large ribosomal subunit protein bL20 (rplT).